The sequence spans 169 residues: Ribosome maturation factor RimM (169 aa).

Positions 94–167 constitute a PRC barrel domain; the sequence is ENEFYFHEII…KITIEVMEGL (74 aa).

It belongs to the RimM family. As to quaternary structure, binds ribosomal protein uS19.

It localises to the cytoplasm. An accessory protein needed during the final step in the assembly of 30S ribosomal subunit, possibly for assembly of the head region. Essential for efficient processing of 16S rRNA. May be needed both before and after RbfA during the maturation of 16S rRNA. It has affinity for free ribosomal 30S subunits but not for 70S ribosomes. The polypeptide is Ribosome maturation factor RimM (Listeria monocytogenes serotype 4b (strain F2365)).